The primary structure comprises 391 residues: Dual-specificity RNA methyltransferase RlmN (391 aa).

Glu-112 serves as the catalytic Proton acceptor. Residues 118-368 (ESDRGTLCIS…VRTPRGRDIL (251 aa)) form the Radical SAM core domain. Cysteines 125 and 371 form a disulfide. [4Fe-4S] cluster contacts are provided by Cys-132, Cys-136, and Cys-139. Residues 197–198 (GE), Ser-229, 251–253 (SLH), and Asn-328 contribute to the S-adenosyl-L-methionine site. Catalysis depends on Cys-371, which acts as the S-methylcysteine intermediate.

The protein belongs to the radical SAM superfamily. RlmN family. Requires [4Fe-4S] cluster as cofactor.

The protein resides in the cytoplasm. It catalyses the reaction adenosine(2503) in 23S rRNA + 2 reduced [2Fe-2S]-[ferredoxin] + 2 S-adenosyl-L-methionine = 2-methyladenosine(2503) in 23S rRNA + 5'-deoxyadenosine + L-methionine + 2 oxidized [2Fe-2S]-[ferredoxin] + S-adenosyl-L-homocysteine. It carries out the reaction adenosine(37) in tRNA + 2 reduced [2Fe-2S]-[ferredoxin] + 2 S-adenosyl-L-methionine = 2-methyladenosine(37) in tRNA + 5'-deoxyadenosine + L-methionine + 2 oxidized [2Fe-2S]-[ferredoxin] + S-adenosyl-L-homocysteine. Its function is as follows. Specifically methylates position 2 of adenine 2503 in 23S rRNA and position 2 of adenine 37 in tRNAs. m2A2503 modification seems to play a crucial role in the proofreading step occurring at the peptidyl transferase center and thus would serve to optimize ribosomal fidelity. This Beijerinckia indica subsp. indica (strain ATCC 9039 / DSM 1715 / NCIMB 8712) protein is Dual-specificity RNA methyltransferase RlmN.